The chain runs to 252 residues: 2-succinyl-6-hydroxy-2,4-cyclohexadiene-1-carboxylate synthase (252 aa).

It belongs to the AB hydrolase superfamily. MenH family. In terms of assembly, monomer.

It carries out the reaction 5-enolpyruvoyl-6-hydroxy-2-succinyl-cyclohex-3-ene-1-carboxylate = (1R,6R)-6-hydroxy-2-succinyl-cyclohexa-2,4-diene-1-carboxylate + pyruvate. It functions in the pathway quinol/quinone metabolism; 1,4-dihydroxy-2-naphthoate biosynthesis; 1,4-dihydroxy-2-naphthoate from chorismate: step 3/7. The protein operates within quinol/quinone metabolism; menaquinone biosynthesis. Its function is as follows. Catalyzes a proton abstraction reaction that results in 2,5-elimination of pyruvate from 2-succinyl-5-enolpyruvyl-6-hydroxy-3-cyclohexene-1-carboxylate (SEPHCHC) and the formation of 2-succinyl-6-hydroxy-2,4-cyclohexadiene-1-carboxylate (SHCHC). This is 2-succinyl-6-hydroxy-2,4-cyclohexadiene-1-carboxylate synthase from Escherichia coli (strain SMS-3-5 / SECEC).